We begin with the raw amino-acid sequence, 450 residues long: MNITILSKETIKPLAPTPHHHKYYKVSLLDQFAPSSYMPFIFFYPNKFADRDAAGILTQLKESLSQILTIYYPLAGRVKDTVYVECNDEGVEFIEAQANGSLSDFLKQPDIAALNNFLPRNGNGLEKGCSISPVAIKATVFECSGIVLGVCIFHKVVDAAAAGEFLQSWAKIGRGSKETVELPNFTSASSLFPPRESLSSKFVRDFDNFFFQGSKSFMRRFVFDATAITTLRTKATSEKVPNPSRVEALMEFVVQHLSTAFKTAKSETPETLMITHPVNLRKRIEPPLPDSTFGNVIWLAFAFYDCDPSETKIKPGDVVERVREAFAALDKESISELETDDAFTSLSELLESVYTNEKIKIYRFTSTCNMGFYDVDFGWGKPVWVAHMGNMVDYRCKQQIVFMETGHMSKDIELWLAAEEDELSVLEKNAEFLAYATPNPTIWLDSDGTN.

His-154 acts as the Proton acceptor in catalysis. A Nuclear localization signal motif is present at residues 218-225; the sequence is MRRFVFDA. Residue Asp-376 is the Proton acceptor of the active site.

Belongs to the plant acyltransferase family. Monomer.

The protein localises to the cytoplasm. Its subcellular location is the nucleus. It catalyses the reaction rhazimol + acetyl-CoA = akuammiline + CoA + H(+). It functions in the pathway alkaloid biosynthesis. Acyltransferase involved in the biosynthesis of akuammilan monoterpene indole alkaloids (MIAs) natural products, components with various biological properties such as antidiabetic, antibacterial, anti-inflammatory, anticancer, and antimalarial activities. Catalyzes the conversion of rhazimol to akuammiline. The sequence is that of Akuammiline synthase 2 from Alstonia scholaris (Dogbane).